We begin with the raw amino-acid sequence, 53 residues long: Rubredoxin (53 aa).

The 53-residue stretch at 1-53 (MTKYVCTVCGYVYDPEVGDPDNNINPGTSFQDIPEDWVCPLCGVGKDQFEEEA) folds into the Rubredoxin-like domain. Cysteine 6, cysteine 9, cysteine 39, and cysteine 42 together coordinate Fe cation.

Belongs to the rubredoxin family. Fe(3+) serves as cofactor.

Its function is as follows. Rubredoxin is a small nonheme, iron protein lacking acid-labile sulfide. Its single Fe, chelated to 4 Cys, functions as an electron acceptor and may also stabilize the conformation of the molecule. This chain is Rubredoxin, found in Acetoanaerobium sticklandii (strain ATCC 12662 / DSM 519 / JCM 1433 / CCUG 9281 / NCIMB 10654 / HF) (Clostridium sticklandii).